We begin with the raw amino-acid sequence, 2193 residues long: Genome polyprotein (2193 aa).

The tract at residues 1–23 is disordered; sequence MGSQVSTQRSGSHENSNSASEGS. Gly-2 carries N-myristoyl glycine; by host lipidation. At 2–1503 the chain is on the cytoplasmic side; that stretch reads GSQVSTQRSG…HLNRAVLVMQ (1502 aa). The interval 566–588 is amphipathic alpha-helix; sequence GDPIADMIDQTVNNQVNRSLTAL. Catalysis depends on for protease 2A activity residues His-883 and Asp-901. Zn(2+) contacts are provided by Cys-918 and Cys-920. Cys-972 functions as the For protease 2A activity in the catalytic mechanism. Residues Cys-978 and His-980 each contribute to the Zn(2+) site. Residues 1112–1184 are membrane-binding; the sequence is SASWLKKFND…EQSAASQEDL (73 aa). The tract at residues 1112-1250 is oligomerization; that stretch reads SASWLKKFND…SPGTGKSLAT (139 aa). An RNA-binding region spans residues 1133–1137; that stretch reads SSKIS. Residues 1216–1374 enclose the SF3 helicase domain; it reads EKRMNNYMQF…YKTDLGRLDA (159 aa). 1240 to 1247 is a binding site for ATP; sequence GSPGTGKS. Cys-1381, Cys-1392, and Cys-1397 together coordinate Zn(2+). Residues 1381-1397 form a C4-type; degenerate zinc finger; that stretch reads CTENNTANFKRCSPLVC. An RNA-binding region spans residues 1424-1431; it reads EYNNRSAI. Residues 1435–1440 are oligomerization; sequence IEALFQ. Residues 1504–1519 lie within the membrane without spanning it; sequence SIATVVAVVSLVYVIY. Over 1520–2193 the chain is Cytoplasmic; that stretch reads KLFAGFQGAY…NLRRNWLELF (674 aa). An O-(5'-phospho-RNA)-tyrosine modification is found at Tyr-1529. Residues 1549–1727 form the Peptidase C3 domain; sequence GPSLDFALSL…FCAGLKRGYF (179 aa). Residues His-1588, Glu-1619, and Cys-1695 each act as for protease 3C activity in the active site. Residues 1958–2074 enclose the RdRp catalytic domain; it reads GSLFAFDYSG…SYPFPIDCSE (117 aa). The Mg(2+) site is built by Asp-1964 and Asp-2060.

This sequence belongs to the picornaviruses polyprotein family. In terms of assembly, interacts with capsid protein VP1 and capsid protein VP3 to form heterotrimeric protomers. As to quaternary structure, interacts with capsid protein VP0, and capsid protein VP3 to form heterotrimeric protomers. Five protomers subsequently associate to form pentamers which serve as building blocks for the capsid. Interacts with capsid protein VP2, capsid protein VP3 and capsid protein VP4 following cleavage of capsid protein VP0. Interacts with capsid protein VP1 and capsid protein VP3 in the mature capsid. In terms of assembly, interacts with capsid protein VP0 and capsid protein VP1 to form heterotrimeric protomers. Five protomers subsequently associate to form pentamers which serve as building blocks for the capsid. Interacts with capsid protein VP4 in the mature capsid. Interacts with protein 2C; this interaction may be important for virion morphogenesis. As to quaternary structure, interacts with capsid protein VP1 and capsid protein VP3. Homodimer. In terms of assembly, homohexamer; forms a hexameric ring structure with 6-fold symmetry characteristic of AAA+ ATPases. Interacts (via N-terminus) with host RTN3 (via reticulon domain); this interaction is important for viral replication. Interacts with capsid protein VP3; this interaction may be important for virion morphogenesis. As to quaternary structure, interacts with protein 3CD. Homodimer. Interacts with host GBF1. Interacts (via GOLD domain) with host ACBD3 (via GOLD domain); this interaction allows the formation of a viral protein 3A/ACBD3 heterotetramer with a 2:2 stoichiometry, which will stimulate the recruitment of host PI4KB in order to synthesize PI4P at the viral RNA replication sites. In terms of assembly, interacts with RNA-directed RNA polymerase. As to quaternary structure, interacts with host IFIH1/MDA5; this interaction inhibits host IFIH1. Protein 3CD: Interacts with protein 3AB and with RNA-directed RNA polymerase. In terms of assembly, interacts with Viral protein genome-linked and with protein 3CD. Mg(2+) serves as cofactor. Specific enzymatic cleavages in vivo by the viral proteases yield processing intermediates and the mature proteins. Post-translationally, myristoylation is required for the formation of pentamers during virus assembly. Further assembly of 12 pentamers and a molecule of genomic RNA generates the provirion. In terms of processing, during virion maturation, immature virions are rendered infectious following cleavage of VP0 into VP4 and VP2. This maturation seems to be an autocatalytic event triggered by the presence of RNA in the capsid and it is followed by a conformational change infectious virion. Myristoylation is required during RNA encapsidation and formation of the mature virus particle. Post-translationally, VPg is uridylylated by the polymerase into VPg-pUpU. This acts as a nucleotide-peptide primer for the genomic RNA replication.

The protein resides in the virion. The protein localises to the host cytoplasm. Its subcellular location is the host cytoplasmic vesicle membrane. It localises to the host nucleus. It carries out the reaction a ribonucleoside 5'-triphosphate + H2O = a ribonucleoside 5'-diphosphate + phosphate + H(+). The enzyme catalyses Selective cleavage of Tyr-|-Gly bond in the picornavirus polyprotein.. The catalysed reaction is RNA(n) + a ribonucleoside 5'-triphosphate = RNA(n+1) + diphosphate. It catalyses the reaction Selective cleavage of Gln-|-Gly bond in the poliovirus polyprotein. In other picornavirus reactions Glu may be substituted for Gln, and Ser or Thr for Gly.. With respect to regulation, replication or transcription is subject to high level of random mutations by the nucleotide analog ribavirin. Forms an icosahedral capsid of pseudo T=3 symmetry with capsid proteins VP2 and VP3. The capsid is 300 Angstroms in diameter, composed of 60 copies of each capsid protein and enclosing the viral positive strand RNA genome. Capsid protein VP1 mainly forms the vertices of the capsid. Capsid protein VP1 interacts with host cell receptor to provide virion attachment to target host cells. This attachment induces virion internalization. After binding to its receptor, the capsid undergoes conformational changes. Capsid protein VP1 N-terminus (that contains an amphipathic alpha-helix) and capsid protein VP4 are externalized. Together, they shape a pore in the host membrane through which viral genome is translocated to host cell cytoplasm. Functionally, forms an icosahedral capsid of pseudo T=3 symmetry with capsid proteins VP2 and VP3. The capsid is 300 Angstroms in diameter, composed of 60 copies of each capsid protein and enclosing the viral positive strand RNA genome. Its function is as follows. Lies on the inner surface of the capsid shell. After binding to the host receptor, the capsid undergoes conformational changes. Capsid protein VP4 is released, Capsid protein VP1 N-terminus is externalized, and together, they shape a pore in the host membrane through which the viral genome is translocated into the host cell cytoplasm. In terms of biological role, component of immature procapsids, which is cleaved into capsid proteins VP4 and VP2 after maturation. Allows the capsid to remain inactive before the maturation step. Cysteine protease that cleaves viral polyprotein and specific host proteins. It is responsible for the autocatalytic cleavage between the P1 and P2 regions, which is the first cleavage occurring in the polyprotein. Also cleaves the host translation initiation factor EIF4G1, in order to shut down the capped cellular mRNA translation. Inhibits the host nucleus-cytoplasm protein and RNA trafficking by cleaving host members of the nuclear pores. Counteracts stress granule formation probably by antagonizing its assembly or promoting its dissassembly. Cleaves and inhibits host IFIH1/MDA5, thereby inhibiting the type-I IFN production and the establishment of the antiviral state. Cleaves and inhibits host MAVS, thereby inhibiting the type-I IFN production and the establishment of the antiviral state. Functionally, plays an essential role in the virus replication cycle by acting as a viroporin. Creates a pore in the host endoplasmic reticulum and as a consequence releases Ca2+ in the cytoplasm of infected cell. In turn, high levels of cytoplasmic calcium may trigger membrane trafficking and transport of viral ER-associated proteins to viroplasms, sites of viral genome replication. Its function is as follows. Induces and associates with structural rearrangements of intracellular membranes. Displays RNA-binding, nucleotide binding and NTPase activities. May play a role in virion morphogenesis and viral RNA encapsidation by interacting with the capsid protein VP3. In terms of biological role, localizes the viral replication complex to the surface of membranous vesicles. Together with protein 3CD binds the Cis-Active RNA Element (CRE) which is involved in RNA synthesis initiation. Acts as a cofactor to stimulate the activity of 3D polymerase, maybe through a nucleid acid chaperone activity. Localizes the viral replication complex to the surface of membranous vesicles. It inhibits host cell endoplasmic reticulum-to-Golgi apparatus transport and causes the disassembly of the Golgi complex, possibly through GBF1 interaction. This would result in depletion of MHC, trail receptors and IFN receptors at the host cell surface. Plays an essential role in viral RNA replication by recruiting ACBD3 and PI4KB at the viral replication sites, thereby allowing the formation of the rearranged membranous structures where viral replication takes place. Functionally, acts as a primer for viral RNA replication and remains covalently bound to viral genomic RNA. VPg is uridylylated prior to priming replication into VPg-pUpU. The oriI viral genomic sequence may act as a template for this. The VPg-pUpU is then used as primer on the genomic RNA poly(A) by the RNA-dependent RNA polymerase to replicate the viral genome. During genome replication, the VPg-RNA linkage is removed by the host TDP2, thereby accelerating replication. During the late stage of the replication cycle, host TDP2 is excluded from sites of viral RNA synthesis and encapsidation, allowing for the generation of progeny virions. Its function is as follows. Involved in the viral replication complex and viral polypeptide maturation. It exhibits protease activity with a specificity and catalytic efficiency that is different from protease 3C. Protein 3CD lacks polymerase activity. Protein 3CD binds to the 5'UTR of the viral genome. In terms of biological role, major viral protease that mediates proteolytic processing of the polyprotein. Cleaves host EIF5B, contributing to host translation shutoff. Also cleaves host PABPC1, contributing to host translation shutoff. Binds and inhibits host IFIH1/MDA5, thereby inhibiting the type-I IFN production and the establishment of the antiviral state. Cleaves host MAP3K7/TAK1, resulting in inhibition of TRAF6-triggered NF-kappa-B induction. Cleaves host NLRP1, triggers host N-glycine-mediated degradation of the autoinhibitory NLRP1 N-terminal fragment. Replicates the viral genomic RNA on the surface of intracellular membranes. May form linear arrays of subunits that propagate along a strong head-to-tail interaction called interface-I. Covalently attaches UMP to a tyrosine of VPg, which is used to prime RNA synthesis. The positive stranded RNA genome is first replicated at virus induced membranous vesicles, creating a dsRNA genomic replication form. This dsRNA is then used as template to synthesize positive stranded RNA genomes. ss(+)RNA genomes are either translated, replicated or encapsidated. This Homo sapiens (Human) protein is Genome polyprotein.